The sequence spans 149 residues: Calmodulin (149 aa).

Ala2 is modified (N-acetylalanine). 4 consecutive EF-hand domains span residues Glu8–Asn43, Pro44–Asp79, Asp81–Lys116, and Leu117–Lys149. Ca(2+) contacts are provided by Asp21, Asp23, Asp25, Thr27, Glu32, Asp57, Asp59, Asn61, Thr63, Glu68, Asp94, Asp96, Asn98, Tyr100, and Glu105. Position 116 is an N6,N6,N6-trimethyllysine (Lys116). Positions 130, 132, 134, 136, and 141 each coordinate Ca(2+).

The protein belongs to the calmodulin family.

Calmodulin acts as part of a calcium signal transduction pathway by mediating the control of a large number of enzymes, ion channels, aquaporins and other proteins through calcium-binding. Calcium-binding is required for the activation of calmodulin. Among the enzymes to be stimulated by the calmodulin-calcium complex are a number of protein kinases, such as myosin light-chain kinases and calmodulin-dependent protein kinase type II (CaMK2), and phosphatases. The chain is Calmodulin (calm) from Electrophorus electricus (Electric eel).